The sequence spans 245 residues: DNA polymerase sliding clamp (245 aa).

Belongs to the PCNA family. In terms of assembly, homotrimer. The subunits circularize to form a toroid; DNA passes through its center. Replication factor C (RFC) is required to load the toroid on the DNA.

In terms of biological role, sliding clamp subunit that acts as a moving platform for DNA processing. Responsible for tethering the catalytic subunit of DNA polymerase and other proteins to DNA during high-speed replication. In Methanococcoides burtonii (strain DSM 6242 / NBRC 107633 / OCM 468 / ACE-M), this protein is DNA polymerase sliding clamp.